We begin with the raw amino-acid sequence, 517 residues long: ATP synthase subunit alpha (517 aa).

G174–T181 is an ATP binding site.

It belongs to the ATPase alpha/beta chains family. In terms of assembly, F-type ATPases have 2 components, CF(1) - the catalytic core - and CF(0) - the membrane proton channel. CF(1) has five subunits: alpha(3), beta(3), gamma(1), delta(1), epsilon(1). CF(0) has three main subunits: a(1), b(2) and c(9-12). The alpha and beta chains form an alternating ring which encloses part of the gamma chain. CF(1) is attached to CF(0) by a central stalk formed by the gamma and epsilon chains, while a peripheral stalk is formed by the delta and b chains.

The protein resides in the cell inner membrane. It carries out the reaction ATP + H2O + 4 H(+)(in) = ADP + phosphate + 5 H(+)(out). Produces ATP from ADP in the presence of a proton gradient across the membrane. The alpha chain is a regulatory subunit. The protein is ATP synthase subunit alpha of Variovorax paradoxus (strain S110).